A 759-amino-acid polypeptide reads, in one-letter code: Protein transport protein sec23-1 (759 aa).

Zn(2+) contacts are provided by C56, C60, C79, and C82.

Belongs to the SEC23/SEC24 family. SEC23 subfamily. In terms of assembly, the COPII coat is composed of at least 5 proteins: the sec23/24 complex, the sec13/31 complex, and the protein sar1.

It is found in the cytoplasm. The protein resides in the cytoplasmic vesicle. It localises to the COPII-coated vesicle membrane. The protein localises to the endoplasmic reticulum membrane. Its subcellular location is the golgi apparatus membrane. Functionally, component of the coat protein complex II (COPII) which promotes the formation of transport vesicles from the endoplasmic reticulum (ER). The coat has two main functions, the physical deformation of the endoplasmic reticulum membrane into vesicles and the selection of cargo molecules. The chain is Protein transport protein sec23-1 (sec231) from Schizosaccharomyces pombe (strain 972 / ATCC 24843) (Fission yeast).